We begin with the raw amino-acid sequence, 173 residues long: Translation initiation factor IF-3 (173 aa).

Belongs to the IF-3 family. In terms of assembly, monomer.

It localises to the cytoplasm. Functionally, IF-3 binds to the 30S ribosomal subunit and shifts the equilibrium between 70S ribosomes and their 50S and 30S subunits in favor of the free subunits, thus enhancing the availability of 30S subunits on which protein synthesis initiation begins. In Methylorubrum populi (strain ATCC BAA-705 / NCIMB 13946 / BJ001) (Methylobacterium populi), this protein is Translation initiation factor IF-3.